A 128-amino-acid polypeptide reads, in one-letter code: Lymphocyte antigen 6 complex locus protein G5c (128 aa).

The first 29 residues, 1-29 (MGAEYGCLPSTSQALYVILLIVLVRMSLV), serve as a signal peptide directing secretion. Residues 37-128 (LRCYRCLLET…NPQNRVFYIP (92 aa)) form the UPAR/Ly6 domain. Cystine bridges form between Cys-39/Cys-66, Cys-42/Cys-51, Cys-58/Cys-85, Cys-94/Cys-111, and Cys-112/Cys-117. Asn-73 carries N-linked (GlcNAc...) asparagine glycosylation.

As to quaternary structure, forms oligomers. In terms of processing, N-glycosylated. As to expression, abundantly expressed in the epididymis.

It localises to the secreted. In terms of biological role, may have a role in hematopoietic cell differentiation. This chain is Lymphocyte antigen 6 complex locus protein G5c (LY6G5C), found in Canis lupus familiaris (Dog).